A 1520-amino-acid polypeptide reads, in one-letter code: MAERANLVFHNKEIDGTAMKRLISRLIDHFGMGYTSHILDQIKTLGFHQATTTSISLGIEDLLTIPSKGWLVQDAEQQSFLLEKHYYYGAVHAVEKLRQSVEIWYATSEYLKQEMNSNFRITDPSNPVYLMSFSGARGNASQVHQLVGMRGLMADPQGQMIDLPIQSNLREGLSLTEYIISCYGARKGVVDTAVRTADAGYLTRRLVEVVQHIIVRRRDCGTIQGISVSPQNGMTEKLFVQTLIGRVLADDIYIGSRCIASRNQDIGIGLVNRFITAFRAQPFRAQPIYIRTPFTCRSTSWICQLCYGRSPTHGDLVELGEAVGIIAGQSIGEPGTQLTLRTFHTGGVFTGGTADLIRSPSNGKIQFNEDLVHPTRTRHGQPAFLCYIDLHVTIQSQDILHSVNIPLKSLILVQNDQYVESEQVIAEIRAGTSTLHFKEKVQKHIYSESDGEMHWSTDVYHAPEYQYGNLRRLPKTSHLWILSVSMCRSSIASFSLHKDQDQMNTYSFSVDGRYIFDFSMANDQVSHRLLDTFGKKDREILDYLTPDRIVSNGHWNCFYPSILQDNSDLLAKKRRNRFAVPLQYHQEQEKERISCLGISMEIPFMGVLRRNTIFAYFDDPRYRKDKRGSGIVKFRYRTLEEEYRTREEEYRTREEDSEDEYESPENKYRTREGEGEYEILEDEYRTLEDEYETLEDEYGILEDEYRTLEKDSEEEYGSLENKYRTREGEGEYEILEEDSEEEYGSSEDGSEKEYGTLEEDSEEDSEEDSEDEYGSPEEDSILKKEGFIEHRGTKEFSLKYQKEVDRFFFILQELHILPRSSSLKVLDNSIIGVDTQLTKNTRSRLGGLVRVKRKKSHTELKIFSGDIHFPEEADKILGGSLIPPEREKKDSKESKKRKNWVYVQRKKILKSKEKYFVSVRPAVSYEMDEGRNLATLFPQDLLQEEDNLQLRLVNFISHENSKLTQRIYHTNSQFVRTCLVVNWEQEVKEGARASLVEVRTNDLIRDFLRIELVKSTISYTRRRYDRTSVGLIPNNRLDRNNTNSFYSKAKIQSLSQHQEVIGTLLNRNKEYPSLMILLASNCSRIGLFKNSKYPNAVKESNPRIPIRDVFGLLGVIVPSISNFSSSYYLLTHNQILLKKYLFLDNLKQTFQVLQGLKYSLIDENQRISNFGSNIMLEPFHLNWHFLHHDSWEETLAIIHLGQFICENLCLFKSHIKKSGQIFIVNMDSFVLRAAKPYLATIGATVHGHYGKILYKGDRLVTFIYEKSRSSDITQGLPKVEQIFEARSIDSLSPNLERRIEDWNERIPRILGVPWGFLIGAELTIAQSRISLVNKIQKVYRSQGVQIHNRHIEIIIRQVTSKVRVSEDGMSNVFLPGELIGLLRAERAGRALDESIYYRAILLGITRASLNTQSFISEASFQETARVLAKAALRGRIDWLKGLKENVVLGGIIPVGTGFQKFVHRSPQDKNLYFEIKKKNLFASEMRDILFLHTELVSSDSDVTNNFYETSETPFTPIYTI.

Residues cysteine 220, cysteine 296, cysteine 303, and cysteine 306 each coordinate Zn(2+). Basic and acidic residues-rich tracts occupy residues 645 to 654 (TREEEYRTRE) and 664 to 674 (PENKYRTREGE). 2 disordered regions span residues 645 to 676 (TREEEYRTREEDSEDEYESPENKYRTREGEGE) and 705 to 786 (YRTL…KKEG). 2 stretches are compositionally biased toward acidic residues: residues 730–748 (GEYEILEEDSEEEYGSSED) and 756–779 (TLEEDSEEDSEEDSEDEYGSPEED).

It belongs to the RNA polymerase beta' chain family. RpoC2 subfamily. In terms of assembly, in plastids the minimal PEP RNA polymerase catalytic core is composed of four subunits: alpha, beta, beta', and beta''. When a (nuclear-encoded) sigma factor is associated with the core the holoenzyme is formed, which can initiate transcription. The cofactor is Zn(2+).

Its subcellular location is the plastid. The protein localises to the chloroplast. It catalyses the reaction RNA(n) + a ribonucleoside 5'-triphosphate = RNA(n+1) + diphosphate. Its function is as follows. DNA-dependent RNA polymerase catalyzes the transcription of DNA into RNA using the four ribonucleoside triphosphates as substrates. The protein is DNA-directed RNA polymerase subunit beta'' of Sorghum bicolor (Sorghum).